The chain runs to 326 residues: Peroxidase 46 (326 aa).

The signal sequence occupies residues 1–27 (MASSYRINCSTLLHLLMFLSSLLTSSA). Residue Asn28 is glycosylated (N-linked (GlcNAc...) asparagine). Cystine bridges form between Cys38–Cys114, Cys71–Cys76, Cys120–Cys322, and Cys199–Cys233. Catalysis depends on His69, which acts as the Proton acceptor. Asp70, Val73, Gly75, Asp77, and Ser79 together coordinate Ca(2+). N-linked (GlcNAc...) asparagine glycosylation is present at Asn85. Position 192 (His192) interacts with heme b. Residue Thr193 coordinates Ca(2+). Residues Asp246, Thr249, and Asp254 each coordinate Ca(2+). Asn278 is a glycosylation site (N-linked (GlcNAc...) asparagine).

This sequence belongs to the peroxidase family. Classical plant (class III) peroxidase subfamily. It depends on heme b as a cofactor. Requires Ca(2+) as cofactor.

It is found in the secreted. It carries out the reaction 2 a phenolic donor + H2O2 = 2 a phenolic radical donor + 2 H2O. Its function is as follows. Removal of H(2)O(2), oxidation of toxic reductants, biosynthesis and degradation of lignin, suberization, auxin catabolism, response to environmental stresses such as wounding, pathogen attack and oxidative stress. These functions might be dependent on each isozyme/isoform in each plant tissue. This is Peroxidase 46 (PER46) from Arabidopsis thaliana (Mouse-ear cress).